The following is a 282-amino-acid chain: Release factor glutamine methyltransferase (282 aa).

S-adenosyl-L-methionine is bound by residues 120–124 (GVGSG), D143, and N189. 189-192 (NPPY) is a substrate binding site.

It belongs to the protein N5-glutamine methyltransferase family. PrmC subfamily.

It catalyses the reaction L-glutaminyl-[peptide chain release factor] + S-adenosyl-L-methionine = N(5)-methyl-L-glutaminyl-[peptide chain release factor] + S-adenosyl-L-homocysteine + H(+). Its function is as follows. Methylates the class 1 translation termination release factors RF1/PrfA and RF2/PrfB on the glutamine residue of the universally conserved GGQ motif. This chain is Release factor glutamine methyltransferase, found in Dictyoglomus turgidum (strain DSM 6724 / Z-1310).